The sequence spans 378 residues: Succinyl-diaminopimelate desuccinylase (378 aa).

H68 lines the Zn(2+) pocket. D70 is a catalytic residue. D101 contacts Zn(2+). Catalysis depends on E135, which acts as the Proton acceptor. Zn(2+) contacts are provided by E136, E164, and H350.

It belongs to the peptidase M20A family. DapE subfamily. As to quaternary structure, homodimer. The cofactor is Zn(2+). Co(2+) serves as cofactor.

The enzyme catalyses N-succinyl-(2S,6S)-2,6-diaminopimelate + H2O = (2S,6S)-2,6-diaminopimelate + succinate. The protein operates within amino-acid biosynthesis; L-lysine biosynthesis via DAP pathway; LL-2,6-diaminopimelate from (S)-tetrahydrodipicolinate (succinylase route): step 3/3. Catalyzes the hydrolysis of N-succinyl-L,L-diaminopimelic acid (SDAP), forming succinate and LL-2,6-diaminopimelate (DAP), an intermediate involved in the bacterial biosynthesis of lysine and meso-diaminopimelic acid, an essential component of bacterial cell walls. This is Succinyl-diaminopimelate desuccinylase from Vibrio atlanticus (strain LGP32) (Vibrio splendidus (strain Mel32)).